The primary structure comprises 117 residues: Large ribosomal subunit protein bL19 (117 aa).

The protein belongs to the bacterial ribosomal protein bL19 family.

Functionally, this protein is located at the 30S-50S ribosomal subunit interface and may play a role in the structure and function of the aminoacyl-tRNA binding site. The protein is Large ribosomal subunit protein bL19 of Aliivibrio fischeri (strain ATCC 700601 / ES114) (Vibrio fischeri).